The sequence spans 154 residues: GVQKTEVEATSTVPAQKLYAGLLLDIDDILPKAFPQAIKSSEIIEGDGGVGTVKLVTLGEASQFNTMKQRIDAIDKDALTYTYSIIGGDILLDIIESIVNHFTIVPTPDGGSIVKNTTIYNTIGDAVIPEENIKDATEKAGLIFKAVEAYLLAN.

It belongs to the BetVI family.

The protein resides in the cytoplasm. Its function is as follows. Catalyzes the two-stage endonucleolytic cleavage to 3'-phosphomononucleotides and 3'-phosphooligonucleotides with 2',3'-cyclic phosphate intermediates. The polypeptide is Ribonuclease 1 (Panax ginseng (Korean ginseng)).